An 89-amino-acid chain; its full sequence is Small ribosomal subunit protein uS17 (89 aa).

It belongs to the universal ribosomal protein uS17 family. As to quaternary structure, part of the 30S ribosomal subunit.

Functionally, one of the primary rRNA binding proteins, it binds specifically to the 5'-end of 16S ribosomal RNA. This chain is Small ribosomal subunit protein uS17, found in Xanthomonas axonopodis pv. citri (strain 306).